The chain runs to 265 residues: Ribosomal RNA small subunit methyltransferase A (265 aa).

S-adenosyl-L-methionine contacts are provided by H11, L13, G38, E59, D83, and N100.

Belongs to the class I-like SAM-binding methyltransferase superfamily. rRNA adenine N(6)-methyltransferase family. RsmA subfamily.

It localises to the cytoplasm. It catalyses the reaction adenosine(1518)/adenosine(1519) in 16S rRNA + 4 S-adenosyl-L-methionine = N(6)-dimethyladenosine(1518)/N(6)-dimethyladenosine(1519) in 16S rRNA + 4 S-adenosyl-L-homocysteine + 4 H(+). Its function is as follows. Specifically dimethylates two adjacent adenosines (A1518 and A1519) in the loop of a conserved hairpin near the 3'-end of 16S rRNA in the 30S particle. May play a critical role in biogenesis of 30S subunits. The protein is Ribosomal RNA small subunit methyltransferase A of Thermosynechococcus vestitus (strain NIES-2133 / IAM M-273 / BP-1).